Consider the following 200-residue polypeptide: Thymidylate kinase (200 aa).

An ATP-binding site is contributed by 10–17 (GIDGAGKS).

It belongs to the thymidylate kinase family.

It catalyses the reaction dTMP + ATP = dTDP + ADP. Its function is as follows. Phosphorylation of dTMP to form dTDP in both de novo and salvage pathways of dTTP synthesis. This is Thymidylate kinase from Cupriavidus metallidurans (strain ATCC 43123 / DSM 2839 / NBRC 102507 / CH34) (Ralstonia metallidurans).